Here is a 351-residue protein sequence, read N- to C-terminus: Cytosolic sulfotransferase 9 (351 aa).

The segment covering 1 to 11 (MDEKDILRNLR) has biased composition (basic and acidic residues). Residues 1–24 (MDEKDILRNLREEEEEEEENQSEE) are disordered. Residues 12–22 (EEEEEEEENQS) show a composition bias toward acidic residues. 80–85 (KSGTTW) is a 3'-phosphoadenylyl sulfate binding site. His-152 serves as the catalytic Proton acceptor. 3'-phosphoadenylyl sulfate is bound by residues Arg-174, Ser-182, Tyr-252, and 317 to 319 (RKG).

The protein belongs to the sulfotransferase 1 family. In terms of tissue distribution, expressed in roots and leaves.

The protein localises to the cytoplasm. Sulfotransferase that utilizes 3'-phospho-5'-adenylyl sulfate (PAPS) as sulfonate donor. No activity with brassinosteroids. The chain is Cytosolic sulfotransferase 9 (STO9) from Arabidopsis thaliana (Mouse-ear cress).